A 439-amino-acid polypeptide reads, in one-letter code: S-layer protein (439 aa).

Residues M1 to A30 form the signal peptide.

Glycosylated.

The protein resides in the secreted. The protein localises to the cell wall. It is found in the S-layer. Its function is as follows. The S-layer is a paracrystalline mono-layered assembly of proteins which coat the surface of bacteria. This is S-layer protein (slpH) from Lactobacillus helveticus (Lactobacillus suntoryeus).